A 283-amino-acid chain; its full sequence is Adenylate dimethylallyltransferase (283 aa).

Belongs to the isopentenyl transferase family.

It carries out the reaction dimethylallyl diphosphate + AMP = N(6)-(dimethylallyl)adenosine 5'-phosphate + diphosphate. In terms of biological role, transfers dimethylallyl groups to AMP as part of the biosynthesis of cytokinin phytohormones like isopentenyl adenine or discadenine which controle spore formation and viability. This is Adenylate dimethylallyltransferase (iptA) from Dictyostelium discoideum (Social amoeba).